The following is a 517-amino-acid chain: MLSSRAQAARTAADKALQRFLRTGAAVRYKVMKNWGVIGGIAAALAAGIYVIWGPITERKKRRKGLVPGLVNLGNTCFMNSLLQGLSACPAFVKWLEEFTTQYSRDQQGPHTHQCLSLTLLSLLKALSCQEVTEEEVLDASCLLDVLRMYRWQISSFEEQDAHELFHVITSSLEDERDRQPRVTHLFDVHSLEQQSEMAPRQVTCHTRGSPHPTTNPWKSQHPFHGRLSSNMVCKHCEHQSPVRFDTFDSLSLSIPAATWGHPLTLDHCLHHFISSESVRDVVCDNCTKIEAKGTQNGEKVEHQRTTFVKQLKLGKLPQCLCIHLQRLSWSSQGTPLKRHEHVQFNEFLMMDFYKYRLLGHKPSQHGPKATESPGSALGVQDTQAAPKPGLSQPAAPKTQFFMNGACSPSLLPALPSPMAFPLPVAPDYSSSMYLFRLMAVVVHHGDMHSGHFVTYRRSPPSAKNPLSTSNQWLWISDDTVRKASLQEVLSSSAYLLFYERVLSRVQQQGREYRSEE.

The Mitochondrial intermembrane segment spans residues 1 to 35; the sequence is MLSSRAQAARTAADKALQRFLRTGAAVRYKVMKNW. Residues 36–56 traverse the membrane as a helical segment; it reads GVIGGIAAALAAGIYVIWGPI. Over 57-517 the chain is Cytoplasmic; the sequence is TERKKRRKGL…QQGREYRSEE (461 aa). One can recognise a USP domain in the interval 68–502; that stretch reads PGLVNLGNTC…SAYLLFYERV (435 aa). Catalysis depends on Cys77, which acts as the Nucleophile. Residues Lys235 and Lys289 each participate in a glycyl lysine isopeptide (Lys-Gly) (interchain with G-Cter in ubiquitin) cross-link. A disordered region spans residues 364-395; it reads SQHGPKATESPGSALGVQDTQAAPKPGLSQPA. Catalysis depends on His452, which acts as the Proton acceptor.

This sequence belongs to the peptidase C19 family. Ubiquitinated by parkin (PRKN) at Lys-235 and Lys-289, leading to its degradation.

It localises to the mitochondrion outer membrane. It catalyses the reaction Thiol-dependent hydrolysis of ester, thioester, amide, peptide and isopeptide bonds formed by the C-terminal Gly of ubiquitin (a 76-residue protein attached to proteins as an intracellular targeting signal).. Its activity is regulated as follows. Inhibited by the diterpenoid derivative 15-oxospiramilactone (S3). In terms of biological role, deubiquitinating enzyme tethered to the mitochondrial outer membrane that acts as a key inhibitor of mitophagy by counteracting the action of parkin (PRKN): hydrolyzes ubiquitin attached by parkin on target proteins, such as RHOT1/MIRO1 and TOMM20, thereby blocking parkin's ability to drive mitophagy. Preferentially cleaves 'Lys-6'- and 'Lys-11'-linked polyubiquitin chains, 2 types of linkage that participate in mitophagic signaling. Does not cleave efficiently polyubiquitin phosphorylated at 'Ser-65'. Acts as a negative regulator of mitochondrial fusion by mediating deubiquitination of MFN1 and MFN2. The protein is Ubiquitin carboxyl-terminal hydrolase 30 (Usp30) of Rattus norvegicus (Rat).